Consider the following 152-residue polypeptide: Protein-export protein SecB (152 aa).

Belongs to the SecB family. In terms of assembly, homotetramer, a dimer of dimers. One homotetramer interacts with 1 SecA dimer.

It is found in the cytoplasm. Functionally, one of the proteins required for the normal export of preproteins out of the cell cytoplasm. It is a molecular chaperone that binds to a subset of precursor proteins, maintaining them in a translocation-competent state. It also specifically binds to its receptor SecA. This is Protein-export protein SecB from Acinetobacter baumannii (strain AB307-0294).